Reading from the N-terminus, the 445-residue chain is ATP-dependent rRNA helicase rrp3 (445 aa).

The span at 1 to 10 shows a compositional bias: basic and acidic residues; sequence MSKNSSRDSS. Residues 1–28 form a disordered region; the sequence is MSKNSSRDSSPEEVSPDTETPSTTTAPK. A compositionally biased stretch (low complexity) spans 17-28; sequence DTETPSTTTAPK. The short motif at 28–56 is the Q motif element; the sequence is KTFRELGVIDSLCEACEELGYTAPTPIQE. The Helicase ATP-binding domain occupies 59-229; the sequence is IPIALEGRDL…RASLSDPVRV (171 aa). Residue 72–79 coordinates ATP; it reads AETGSGKT. The short motif at 178–181 is the DEAD box element; it reads DEAD. The 161-residue stretch at 240 to 400 folds into the Helicase C-terminal domain; the sequence is KLLQSYLFIP…EYKPEKDEVM (161 aa). The segment at 415 to 445 is disordered; the sequence is LTMRDMQDKDNKGRGPRNRKRTRDDLDQDDG.

It belongs to the DEAD box helicase family. DDX47/RRP3 subfamily. In terms of assembly, interacts with the SSU processome.

It localises to the nucleus. The catalysed reaction is ATP + H2O = ADP + phosphate + H(+). In terms of biological role, ATP-dependent rRNA helicase required for pre-ribosomal RNA processing. Involved in the maturation of the 35S-pre-rRNA and to its cleavage to mature 18S rRNA. This chain is ATP-dependent rRNA helicase rrp3, found in Aspergillus terreus (strain NIH 2624 / FGSC A1156).